Reading from the N-terminus, the 428-residue chain is AP-1 complex subunit mu-2 (428 aa).

Residues lysine 170 to arginine 426 enclose the MHD domain.

Belongs to the adaptor complexes medium subunit family. As to quaternary structure, adaptor protein complex 1 (AP-1) is a heterotetramer composed of two large adaptins (gamma-type subunit and beta-type subunit), a medium adaptin (mu-type subunit) and a small adaptin (sigma-type subunit). Ubiquitous.

It is found in the golgi apparatus. The protein localises to the trans-Golgi network membrane. Its subcellular location is the early endosome membrane. It localises to the cytoplasmic vesicle. The protein resides in the clathrin-coated vesicle membrane. Functionally, subunit of clathrin-associated adaptor protein complex 1 that plays a role in protein sorting at the trans-Golgi network and early endosomes (TGN/EE). The AP complexes mediate the recruitment of clathrin to membranes and the recognition of sorting signals within the cytosolic tails of transmembrane cargo molecules. Required for KNOLLE localization at the cell plate to mediate cytokinesis. Functions redundantly with AP1M1 in multiple post-Golgi trafficking pathways leading from the TGN to the vacuole, the plasma membrane, and the cell-division plane. The protein is AP-1 complex subunit mu-2 (AP1M2) of Arabidopsis thaliana (Mouse-ear cress).